A 365-amino-acid polypeptide reads, in one-letter code: Peptide chain release factor 2 (365 aa).

Gln-252 carries the N5-methylglutamine modification.

This sequence belongs to the prokaryotic/mitochondrial release factor family. Methylated by PrmC. Methylation increases the termination efficiency of RF2.

The protein resides in the cytoplasm. Peptide chain release factor 2 directs the termination of translation in response to the peptide chain termination codons UGA and UAA. The sequence is that of Peptide chain release factor 2 from Shigella flexneri.